We begin with the raw amino-acid sequence, 541 residues long: Atlastin-3 (541 aa).

A disordered region spans residues 1–22; that stretch reads MLSPQRTAAVASRGAGDAMENG. The N-terminal hypervariable region (HVR) stretch occupies residues 1–25; sequence MLSPQRTAAVASRGAGDAMENGKPG. At 1–445 the chain is on the cytoplasmic side; it reads MLSPQRTAAV…NVFSTFRTPA (445 aa). The region spanning 57 to 306 is the GB1/RHD3-type G domain; the sequence is DLDVVVVSVA…LIPYVLNPSK (250 aa). Residues arginine 70, lysine 71, glycine 72, lysine 73, serine 74, phenylalanine 75, and arginine 109 each coordinate GDP. Position 142 (aspartate 142) interacts with Mg(2+). Arginine 213, aspartate 214, valine 272, and serine 275 together coordinate GDP. The segment at 344 to 434 is 3HB (three-helix bundle) domain; the sequence is MLQATAANNL…YENFCKHNGS (91 aa). Lysine 391 bears the N6-acetyllysine mark. The chain crosses the membrane as a helical span at residues 446 to 466; it reads VLFTGIAVLYIASGLTGFIGL. Glutamate 467 is a topological domain (lumenal). Residues 468–488 form a helical membrane-spanning segment; the sequence is VVAQLFNCMVGLLLIALLTWG. At 489-541 the chain is on the cytoplasmic side; sequence YIRYSGQYLELGGAIDSGAAYVLEQASSHIGNSTQAAVRDAIAGRPPADKKSQ.

This sequence belongs to the TRAFAC class dynamin-like GTPase superfamily. GB1/RHD3 GTPase family. GB1 subfamily. Monomeric and homodimeric. The homodimer, transiently formed by two molecules on opposing membranes, is the active form mediating ER membrane fusion. Interacts with ZFYVE27; both proteins are involved in endoplasmic reticulum tubular network organization. Interacts with REEP5; both proteins are involved in endoplasmic reticulum tubular network organization.

The protein resides in the endoplasmic reticulum membrane. The catalysed reaction is GTP + H2O = GDP + phosphate + H(+). In terms of biological role, atlastin-3 (ATL3) is a membrane-anchored GTPase that mediates the GTP-dependent fusion of endoplasmic reticulum (ER) membranes, maintaining the continuous ER network. It facilitates the formation of three-way junctions where ER tubules intersect. Two atlastin-3 on neighboring ER tubules bind GTP and form loose homodimers through the GB1/RHD3-type G domains and 3HB regions. Upon GTP hydrolysis, the 3HB regions tighten, pulling the membranes together to drive their fusion. After fusion, the homodimer disassembles upon release of inorganic phosphate (Pi). Subsequently, GDP dissociates, resetting the monomers to a conformation ready for a new fusion cycle. This chain is Atlastin-3, found in Rattus norvegicus (Rat).